A 1132-amino-acid polypeptide reads, in one-letter code: NUT family member 1 (1132 aa).

Disordered stretches follow at residues M1 to S56, A337 to P365, L383 to Y405, E476 to R584, R693 to D714, D873 to S892, and P922 to L1017. Over residues A21–D36 the composition is skewed to pro residues. Basic residues predominate over residues A337–Q352. The span at E395–M404 shows a compositional bias: acidic residues. 3 stretches are compositionally biased toward polar residues: residues S487–G497, M697–S706, and E883–S892. The segment covering G932–K942 has biased composition (basic and acidic residues). Positions Q950–G971 are enriched in polar residues. S1026, S1029, and S1031 each carry phosphoserine. Positions S1031 to Q1132 are disordered. Position 1046 is an N5-methylglutamine (Q1046). Positions G1123–Q1132 are enriched in basic residues.

This sequence belongs to the NUT family. In terms of processing, methylated at Gln-1046 by N6AMT1. Phosphorylation on Ser-1026, Ser-1029 or Ser-1031 is important for cytoplasmic export. Specifically expressed in testis.

Its subcellular location is the cytoplasm. The protein localises to the nucleus. Its function is as follows. Plays a role in the regulation of proliferation. Regulates TERT expression by modulating SP1 binding to TERT promoter binding sites. The polypeptide is NUT family member 1 (Homo sapiens (Human)).